Reading from the N-terminus, the 320-residue chain is MQTRNTFSWIREEITRSISVSLMIYIITWASISSAYPIFAQQNYENPREATGRIVCANCHLASKPVDIEVPQAVLPDTVFEAVVKIPYDMQLKQVLANGKKGALNVGAVLILPEGFELAPPDRISPEMKEKIGNLSFQNYRPNKKNILVIGPVPGQKYSEITFPILAPDPATNKDVHFLKYPIYVGGNRGRGQIYPDGSKSNNTVYNATAGGIISKILRKEKGGYEITIVDASNERQVIDIIPRGLELLVSEGESIKLDQPLTSNPNVGGFGQGDAEIVLQDPLRVQGLLFFLGSVVLAQIFLVLKKKQFEKVQLSEMNF.

Residues 1-35 form the signal peptide; sequence MQTRNTFSWIREEITRSISVSLMIYIITWASISSA. Residues Tyr-36, Cys-56, Cys-59, and His-60 each coordinate heme. Residues 286 to 305 traverse the membrane as a helical segment; that stretch reads VQGLLFFLGSVVLAQIFLVL.

The protein belongs to the cytochrome f family. In terms of assembly, the 4 large subunits of the cytochrome b6-f complex are cytochrome b6, subunit IV (17 kDa polypeptide, petD), cytochrome f and the Rieske protein, while the 4 small subunits are PetG, PetL, PetM and PetN. The complex functions as a dimer. It depends on heme as a cofactor. Post-translationally, purified from leaves as a water-soluble monomeric protein with a mass of 28.16 kDa, cleavage occurs after Gln-287 and separates the heme-binding from the membrane.

It is found in the plastid. The protein localises to the chloroplast thylakoid membrane. In terms of biological role, component of the cytochrome b6-f complex, which mediates electron transfer between photosystem II (PSII) and photosystem I (PSI), cyclic electron flow around PSI, and state transitions. The chain is Cytochrome f (petA) from Brassica rapa subsp. rapa (Turnip).